The chain runs to 271 residues: L-aspartate dehydrogenase (271 aa).

NAD(+)-binding residues include Ala-124 and Asn-192. His-222 is an active-site residue.

This sequence belongs to the L-aspartate dehydrogenase family.

It carries out the reaction L-aspartate + NADP(+) + H2O = oxaloacetate + NH4(+) + NADPH + H(+). The catalysed reaction is L-aspartate + NAD(+) + H2O = oxaloacetate + NH4(+) + NADH + H(+). Its pathway is cofactor biosynthesis; NAD(+) biosynthesis; iminoaspartate from L-aspartate (dehydrogenase route): step 1/1. Its function is as follows. Specifically catalyzes the NAD or NADP-dependent dehydrogenation of L-aspartate to iminoaspartate. This Methanococcoides burtonii (strain DSM 6242 / NBRC 107633 / OCM 468 / ACE-M) protein is L-aspartate dehydrogenase.